A 420-amino-acid chain; its full sequence is Transcriptional adapter 2-beta (420 aa).

Residues 4-59 (LGKKYCVYCLAEVSPLRFRCTECQDIELCPECFSAGAEIGHHRRYHGYQLVDGGRF) form a ZZ-type zinc finger. The Zn(2+) site is built by C9, C12, C23, C26, C32, C35, H45, and H49. One can recognise an SANT domain in the interval 65–118 (EAEGGWTSREEQLLLDAIEQFGFGNWEDMAAHVGASRTPQEVMEHYVSMYIHGN). The interval 305–335 (SAEYEAARHKREKRKENKNLAGSKRGKEDGK) is disordered.

Interacts with GCN5L2, SMARCA4, SMARCE1 and PAX5. Component of the TFTC-HAT complex.

It is found in the nucleus. Coactivates PAX5-dependent transcription together with either SMARCA4 or GCN5L2. The polypeptide is Transcriptional adapter 2-beta (TADA2B) (Homo sapiens (Human)).